The sequence spans 255 residues: Triosephosphate isomerase (255 aa).

10 to 12 (NWK) contacts substrate. Catalysis depends on His-96, which acts as the Electrophile. Residue Glu-169 is the Proton acceptor of the active site. Substrate-binding positions include Gly-175, Ser-214, and 235–236 (GG).

The protein belongs to the triosephosphate isomerase family. In terms of assembly, homodimer.

The protein resides in the cytoplasm. The catalysed reaction is D-glyceraldehyde 3-phosphate = dihydroxyacetone phosphate. Its pathway is carbohydrate biosynthesis; gluconeogenesis. The protein operates within carbohydrate degradation; glycolysis; D-glyceraldehyde 3-phosphate from glycerone phosphate: step 1/1. In terms of biological role, involved in the gluconeogenesis. Catalyzes stereospecifically the conversion of dihydroxyacetone phosphate (DHAP) to D-glyceraldehyde-3-phosphate (G3P). The polypeptide is Triosephosphate isomerase (Coxiella burnetii (strain Dugway 5J108-111)).